We begin with the raw amino-acid sequence, 1236 residues long: ESX-4 secretion system protein EccC4 (1236 aa).

2 consecutive transmembrane segments (helical) span residues 32–52 (LLPV…FLPG) and 59–79 (PTFL…AVTG). 3 FtsK domains span residues 407–607 (GTAV…SESR), 747–936 (RVPL…ADSE), and 1018–1201 (GQPV…DEGA). Residues 430-437 (GATGSGKS), 765-772 (GAPQTGKS), and 1035-1042 (GDNECGKT) each bind ATP.

Part of the ESX-4 / type VII secretion system (T7SS), which is composed of cytosolic and membrane components.

The protein localises to the cell membrane. The sequence is that of ESX-4 secretion system protein EccC4 (eccC4) from Mycobacterium tuberculosis (strain ATCC 25618 / H37Rv).